Consider the following 391-residue polypeptide: Ferrochelatase (391 aa).

Residues His-196 and Glu-281 each contribute to the Fe cation site.

The protein belongs to the ferrochelatase family.

The protein resides in the cytoplasm. It carries out the reaction heme b + 2 H(+) = protoporphyrin IX + Fe(2+). The protein operates within porphyrin-containing compound metabolism; protoheme biosynthesis; protoheme from protoporphyrin-IX: step 1/1. Functionally, catalyzes the ferrous insertion into protoporphyrin IX. The polypeptide is Ferrochelatase (Prochlorococcus marinus (strain MIT 9211)).